Consider the following 306-residue polypeptide: Ribonuclease Z (306 aa).

His63, His65, Asp67, His68, His141, Asp211, and His269 together coordinate Zn(2+). The Proton acceptor role is filled by Asp67.

Belongs to the RNase Z family. Homodimer. The cofactor is Zn(2+).

It catalyses the reaction Endonucleolytic cleavage of RNA, removing extra 3' nucleotides from tRNA precursor, generating 3' termini of tRNAs. A 3'-hydroxy group is left at the tRNA terminus and a 5'-phosphoryl group is left at the trailer molecule.. In terms of biological role, zinc phosphodiesterase, which displays some tRNA 3'-processing endonuclease activity. Probably involved in tRNA maturation, by removing a 3'-trailer from precursor tRNA. This is Ribonuclease Z from Staphylococcus aureus (strain Mu3 / ATCC 700698).